Here is a 403-residue protein sequence, read N- to C-terminus: Aminomethyltransferase, mitochondrial (403 aa).

The N-terminal 28 residues, 1–28 (MQRAVSVVARLGFRLQAFPPALCRPLSC), are a transit peptide targeting the mitochondrion. Substrate is bound by residues glutamate 232, arginine 261, and tyrosine 399.

The protein belongs to the GcvT family. The glycine cleavage system is composed of four proteins: P, T, L and H.

Its subcellular location is the mitochondrion. The catalysed reaction is N(6)-[(R)-S(8)-aminomethyldihydrolipoyl]-L-lysyl-[protein] + (6S)-5,6,7,8-tetrahydrofolate = N(6)-[(R)-dihydrolipoyl]-L-lysyl-[protein] + (6R)-5,10-methylene-5,6,7,8-tetrahydrofolate + NH4(+). The glycine cleavage system catalyzes the degradation of glycine. This Homo sapiens (Human) protein is Aminomethyltransferase, mitochondrial.